Here is a 391-residue protein sequence, read N- to C-terminus: Elongation factor Tu 1 (391 aa).

One can recognise a tr-type G domain in the interval 10–201 (KPHVNIGTIG…EVDNYIPTPE (192 aa)). The interval 19–26 (GHVDHGKT) is G1. 19-26 (GHVDHGKT) is a binding site for GTP. Position 26 (Thr-26) interacts with Mg(2+). The tract at residues 55–59 (GITIS) is G2. Residues 76–79 (DCPG) form a G3 region. GTP contacts are provided by residues 76–80 (DCPGH) and 131–134 (NKVD). The interval 131–134 (NKVD) is G4. The interval 169–171 (SAL) is G5.

This sequence belongs to the TRAFAC class translation factor GTPase superfamily. Classic translation factor GTPase family. EF-Tu/EF-1A subfamily. As to quaternary structure, monomer.

The protein resides in the cytoplasm. It catalyses the reaction GTP + H2O = GDP + phosphate + H(+). In terms of biological role, GTP hydrolase that promotes the GTP-dependent binding of aminoacyl-tRNA to the A-site of ribosomes during protein biosynthesis. The chain is Elongation factor Tu 1 from Bartonella quintana (strain Toulouse) (Rochalimaea quintana).